The sequence spans 425 residues: Riboflavin biosynthesis protein RibBA (425 aa).

The DHBP synthase stretch occupies residues 1–204 (MTRLDSVERA…IADLIEWRRK (204 aa)). Residues 28-29 (RE), aspartate 33, 141-145 (RPGHT), and glutamate 165 contribute to the D-ribulose 5-phosphate site. Position 29 (glutamate 29) interacts with Mg(2+). Histidine 144 contributes to the Mg(2+) binding site. The segment at 205–425 (HEKHIERIAE…HLPGEFGGAL (221 aa)) is GTP cyclohydrolase II. 259–263 (RVHSE) provides a ligand contact to GTP. 3 residues coordinate Zn(2+): cysteine 264, cysteine 275, and cysteine 277. GTP-binding positions include glutamine 280, 303 to 305 (EGR), and threonine 325. Residue aspartate 337 is the Proton acceptor; for GTP cyclohydrolase activity of the active site. Catalysis depends on arginine 339, which acts as the Nucleophile; for GTP cyclohydrolase activity. GTP contacts are provided by threonine 360 and lysine 365.

In the N-terminal section; belongs to the DHBP synthase family. This sequence in the C-terminal section; belongs to the GTP cyclohydrolase II family. Requires Mg(2+) as cofactor. Mn(2+) serves as cofactor. It depends on Zn(2+) as a cofactor.

It carries out the reaction D-ribulose 5-phosphate = (2S)-2-hydroxy-3-oxobutyl phosphate + formate + H(+). The catalysed reaction is GTP + 4 H2O = 2,5-diamino-6-hydroxy-4-(5-phosphoribosylamino)-pyrimidine + formate + 2 phosphate + 3 H(+). Its pathway is cofactor biosynthesis; riboflavin biosynthesis; 2-hydroxy-3-oxobutyl phosphate from D-ribulose 5-phosphate: step 1/1. It participates in cofactor biosynthesis; riboflavin biosynthesis; 5-amino-6-(D-ribitylamino)uracil from GTP: step 1/4. Its function is as follows. Catalyzes the conversion of D-ribulose 5-phosphate to formate and 3,4-dihydroxy-2-butanone 4-phosphate. In terms of biological role, catalyzes the conversion of GTP to 2,5-diamino-6-ribosylamino-4(3H)-pyrimidinone 5'-phosphate (DARP), formate and pyrophosphate. The sequence is that of Riboflavin biosynthesis protein RibBA from Mycolicibacterium paratuberculosis (strain ATCC BAA-968 / K-10) (Mycobacterium paratuberculosis).